A 134-amino-acid chain; its full sequence is Large ribosomal subunit protein uL18 (134 aa).

This sequence belongs to the universal ribosomal protein uL18 family. As to quaternary structure, part of the 50S ribosomal subunit; part of the 5S rRNA/L5/L18/L25 subcomplex. Contacts the 5S and 23S rRNAs.

In terms of biological role, this is one of the proteins that bind and probably mediate the attachment of the 5S RNA into the large ribosomal subunit, where it forms part of the central protuberance. This Corynebacterium efficiens (strain DSM 44549 / YS-314 / AJ 12310 / JCM 11189 / NBRC 100395) protein is Large ribosomal subunit protein uL18.